Here is a 363-residue protein sequence, read N- to C-terminus: UDP-3-O-acylglucosamine N-acyltransferase (363 aa).

His266 functions as the Proton acceptor in the catalytic mechanism.

This sequence belongs to the transferase hexapeptide repeat family. LpxD subfamily. As to quaternary structure, homotrimer.

The enzyme catalyses a UDP-3-O-[(3R)-3-hydroxyacyl]-alpha-D-glucosamine + a (3R)-hydroxyacyl-[ACP] = a UDP-2-N,3-O-bis[(3R)-3-hydroxyacyl]-alpha-D-glucosamine + holo-[ACP] + H(+). It functions in the pathway bacterial outer membrane biogenesis; LPS lipid A biosynthesis. Its function is as follows. Catalyzes the N-acylation of UDP-3-O-acylglucosamine using 3-hydroxyacyl-ACP as the acyl donor. Is involved in the biosynthesis of lipid A, a phosphorylated glycolipid that anchors the lipopolysaccharide to the outer membrane of the cell. The polypeptide is UDP-3-O-acylglucosamine N-acyltransferase (Bordetella bronchiseptica (strain ATCC BAA-588 / NCTC 13252 / RB50) (Alcaligenes bronchisepticus)).